Here is a 193-residue protein sequence, read N- to C-terminus: dCTP deaminase (193 aa).

Residues 110 to 115, D128, 136 to 138, Y171, K178, and Q182 each bind dCTP; these read RSSLAR and VLE. E138 functions as the Proton donor/acceptor in the catalytic mechanism.

It belongs to the dCTP deaminase family. As to quaternary structure, homotrimer.

It catalyses the reaction dCTP + H2O + H(+) = dUTP + NH4(+). Its pathway is pyrimidine metabolism; dUMP biosynthesis; dUMP from dCTP (dUTP route): step 1/2. In terms of biological role, catalyzes the deamination of dCTP to dUTP. In Aeromonas salmonicida (strain A449), this protein is dCTP deaminase.